The primary structure comprises 377 residues: Probable O-methyltransferase 3 (377 aa).

Aspartate 241 serves as a coordination point for S-adenosyl-L-methionine. Catalysis depends on histidine 279, which acts as the Proton acceptor.

Belongs to the class I-like SAM-binding methyltransferase superfamily. Cation-independent O-methyltransferase family. Highly expressed in lupulin glands. Detected in early-, mid- and late-stage cones.

This is Probable O-methyltransferase 3 from Humulus lupulus (European hop).